Consider the following 169-residue polypeptide: Transcription regulatory protein SNF11 (169 aa).

The tract at residues 1–24 (MSSEIAYSNTNTNTENENRNTGAG) is disordered. Ser-2 carries the N-acetylserine modification. Low complexity predominate over residues 9 to 21 (NTNTNTENENRNT). 8 repeat units span residues 28 to 31 (NTNA), 32 to 35 (NANA), 36 to 39 (NATA), 40 to 43 (NATA), 44 to 47 (NATA), 48 to 51 (NATA), 76 to 80 (LLARV), and 160 to 165 (LLLARV). The segment at 28 to 51 (NTNANANANATANATANATANATA) is 6 X 4 AA tandem repeats of N-[AT]-[NT]-A. A 2 X 5 AA repeats of L-L-A-R-V region spans residues 76 to 165 (LLARVIQMNN…SKLYLLLARV (90 aa)).

In terms of assembly, component of the SWI/SNF global transcription activator complex. The 1.14 MDa SWI/SNF complex is composed of 11 different subunits: one copy each of SWI1, SNF2/SWI2, SNF5, SNF12/SWP73, ARP7/SWP61, ARP9/SWP59; two copies each of SWI3, SNF6, SNF11, SWP82; and three copies of TAF14/SWP29.

Its subcellular location is the nucleus. Functionally, involved in transcriptional activation. Component of the SWI/SNF complex, an ATP-dependent chromatin remodeling complex, which is required for the positive and negative regulation of gene expression of a large number of genes. It changes chromatin structure by altering DNA-histone contacts within a nucleosome, leading eventually to a change in nucleosome position, thus facilitating or repressing binding of gene-specific transcription factors. This is Transcription regulatory protein SNF11 (SNF11) from Saccharomyces cerevisiae (strain ATCC 204508 / S288c) (Baker's yeast).